We begin with the raw amino-acid sequence, 545 residues long: E3 ubiquitin-protein ligase ipaH9.8 (545 aa).

Positions 1–242 (MLPINNNFSL…YHGPRIYFSM (242 aa)) are interaction with target proteins. LRR repeat units lie at residues 57–77 (NSDELRLDRLNLSSLPDNLPA), 78–99 (QITLLNVSYNQLTNLPELPVTL), 100–117 (KKLYSASNKLSELPVLPP), 118–139 (ALESLQVQHNELENLPALPDSL), 140–157 (LTMNISYNEIVSLPSLPQ), 158–179 (ALKNLRATRNFLTELPAFSEGN), 182–203 (VVREYFFDRNQISHIPESILNL), and 205–228 (NECSIHISDNPLSSHALQALQRLT). The segment at 243-250 (SDGQQNTL) is linker. The segment at 251-545 (HRPLADAVTA…SENGSQLHHS (295 aa)) is E3 ubiquitin-protein ligase catalytic domain. The region spanning 253 to 545 (PLADAVTAWF…SENGSQLHHS (293 aa)) is the NEL domain. The active-site Glycyl thioester intermediate is the cysteine 337.

The protein belongs to the LRR-containing bacterial E3 ligase family. In terms of assembly, also interacts with human and mouse U2AF1 (U2AF35). Ubiquitinated in the presence of host E1 ubiquitin-activating enzyme, E2 ubiquitin-conjugating enzyme and ubiquitin.

The protein resides in the secreted. It is found in the host cytoplasm. Its subcellular location is the host nucleus. It carries out the reaction S-ubiquitinyl-[E2 ubiquitin-conjugating enzyme]-L-cysteine + [acceptor protein]-L-lysine = [E2 ubiquitin-conjugating enzyme]-L-cysteine + N(6)-ubiquitinyl-[acceptor protein]-L-lysine.. Its activity is regulated as follows. Exists in an autoinhibited state in the absence of substrate protein, due to interactions of the leucine-rich repeats with NEL domain. Is activated upon binding to a substrate protein. Functionally, effector E3 ubiquitin ligase that interferes with host's ubiquitination pathway and modulates the acute inflammatory responses, thus facilitating bacterial colonization within the host cell. Interacts with IKBKG (NEMO) and TNIP1 (ABIN-1), a ubiquitin-binding adapter protein, which results in TNIP1-dependent 'Lys-27'-linked polyubiquitination of IKBKG. Consequently, polyubiquitinated IKBKG undergoes proteasome-dependent degradation, which perturbs NF-kappa-B activation during bacterial infection. Mediates polyubiquitination of host U2AF1, leading to its proteasomal degradation. Catalyzes 'Lys-48'-linked polyubiquitination and subsequent degradation of a subset of host guanylate-binding proteins (GBP1, GBP2, GBP4 and GBP6), thereby suppressing host cell defense. In contrast, host GBP3 and GBP7 are not ubiquitinated by IpaH9.8. Uses UBE2D2 (UBCH5B) as an E2 ubiquitin-conjugating enzyme. The sequence is that of E3 ubiquitin-protein ligase ipaH9.8 (ipaH9.8) from Shigella flexneri serotype X (strain 2002017).